Consider the following 518-residue polypeptide: Delta(14)-sterol reductase erg24B (518 aa).

N36 is a glycosylation site (N-linked (GlcNAc...) asparagine). Transmembrane regions (helical) follow at residues 110-130 (VTMW…FLPG), 150-170 (AFLS…LYGT), 182-202 (YVQV…FVYL), 294-314 (IVLT…MEPA), 321-341 (VIMD…VPFL), and 355-375 (ELGL…YVIF). NADP(+) is bound by residues K382, R386, L409, W414, and 421-422 (NY). A helical transmembrane segment spans residues 464-484 (SRGWGMIFTYFYMIYFGVLLL). Residues D490, 494 to 498 (CKRKY), and Y505 each bind NADP(+).

The protein belongs to the ERG4/ERG24 family.

The protein resides in the endoplasmic reticulum membrane. The protein operates within steroid metabolism; ergosterol biosynthesis. Delta(14)-sterol reductase; part of the third module of ergosterol biosynthesis pathway that includes the late steps of the pathway. Catalyzes the reduction of the C14=C15 double bond within 4,4,24-trimethyl ergosta-8,14,24(28)-trienolto produce 4,4-dimethylfecosterol. The third module or late pathway involves the ergosterol synthesis itself through consecutive reactions that mainly occur in the endoplasmic reticulum (ER) membrane. Firstly, the squalene synthase erg9 catalyzes the condensation of 2 farnesyl pyrophosphate moieties to form squalene, which is the precursor of all steroids. Squalene synthase is crucial for balancing the incorporation of farnesyl diphosphate (FPP) into sterol and nonsterol isoprene synthesis. Secondly, squalene is converted into lanosterol by the consecutive action of the squalene epoxidase erg1 and the lanosterol synthase erg7. Then, the delta(24)-sterol C-methyltransferase erg6 methylates lanosterol at C-24 to produce eburicol. Eburicol is the substrate of the sterol 14-alpha demethylase encoded by cyp51A and cyp51B, to yield 4,4,24-trimethyl ergosta-8,14,24(28)-trienol. The C-14 reductase erg24 then reduces the C14=C15 double bond which leads to 4,4-dimethylfecosterol. A sequence of further demethylations at C-4, involving the C-4 demethylation complex containing the C-4 methylsterol oxidases erg25A or erg25B, the sterol-4-alpha-carboxylate 3-dehydrogenase erg26 and the 3-keto-steroid reductase erg27, leads to the production of fecosterol via 4-methylfecosterol. The C-8 sterol isomerase erg2 then catalyzes the reaction which results in unsaturation at C-7 in the B ring of sterols and thus converts fecosterol to episterol. The sterol-C5-desaturase erg3B then catalyzes the introduction of a C-5 double bond in the B ring to produce 5-dehydroepisterol. The 2 other sterol-C5-desaturases, erg3A and erg3C, seem to be less important in ergosterol biosynthesis. The C-22 sterol desaturase erg5 further converts 5-dehydroepisterol into ergosta-5,7,22,24(28)-tetraen-3beta-ol by forming the C-22(23) double bond in the sterol side chain. Finally, ergosta-5,7,22,24(28)-tetraen-3beta-ol is substrate of the C-24(28) sterol reductases erg4A and erg4B to produce ergosterol. Possible alternative sterol biosynthetic pathways might exist from fecosterol to ergosterol, depending on the activities of the erg3 isoforms. This Aspergillus fumigatus (strain ATCC MYA-4609 / CBS 101355 / FGSC A1100 / Af293) (Neosartorya fumigata) protein is Delta(14)-sterol reductase erg24B.